We begin with the raw amino-acid sequence, 72 residues long: Translation initiation factor IF-1 (72 aa).

The S1-like domain occupies M1–K72.

Belongs to the IF-1 family. As to quaternary structure, component of the 30S ribosomal translation pre-initiation complex which assembles on the 30S ribosome in the order IF-2 and IF-3, IF-1 and N-formylmethionyl-tRNA(fMet); mRNA recruitment can occur at any time during PIC assembly.

The protein localises to the cytoplasm. In terms of biological role, one of the essential components for the initiation of protein synthesis. Stabilizes the binding of IF-2 and IF-3 on the 30S subunit to which N-formylmethionyl-tRNA(fMet) subsequently binds. Helps modulate mRNA selection, yielding the 30S pre-initiation complex (PIC). Upon addition of the 50S ribosomal subunit IF-1, IF-2 and IF-3 are released leaving the mature 70S translation initiation complex. This Gluconobacter oxydans (strain 621H) (Gluconobacter suboxydans) protein is Translation initiation factor IF-1.